Consider the following 688-residue polypeptide: Translation initiation factor IF-2 (688 aa).

Residues 53–101 (GAEKPSVADEFEVEEKVVRSKKNSNKNKKKGKANEDKRQDNFAGRQQTP) form a disordered region. Residues 71–83 (RSKKNSNKNKKKG) show a composition bias toward basic residues. The region spanning 190–359 (ERPAVVTIMG…LLVSEVEEYK (170 aa)) is the tr-type G domain. A G1 region spans residues 199–206 (GHVDHGKT). Position 199 to 206 (199 to 206 (GHVDHGKT)) interacts with GTP. The tract at residues 224–228 (GITQH) is G2. Residues 245–248 (DTPG) form a G3 region. GTP is bound by residues 245–249 (DTPGH) and 299–302 (NKMD). The tract at residues 299–302 (NKMD) is G4. The interval 335–337 (SAI) is G5.

The protein belongs to the TRAFAC class translation factor GTPase superfamily. Classic translation factor GTPase family. IF-2 subfamily.

Its subcellular location is the cytoplasm. Its function is as follows. One of the essential components for the initiation of protein synthesis. Protects formylmethionyl-tRNA from spontaneous hydrolysis and promotes its binding to the 30S ribosomal subunits. Also involved in the hydrolysis of GTP during the formation of the 70S ribosomal complex. The chain is Translation initiation factor IF-2 from Bacillus mycoides (strain KBAB4) (Bacillus weihenstephanensis).